A 258-amino-acid chain; its full sequence is 5'-nucleotidase SurE (258 aa).

A divalent metal cation-binding residues include Asp-14, Asp-15, Ser-45, and Asn-101.

The protein belongs to the SurE nucleotidase family. A divalent metal cation is required as a cofactor.

The protein localises to the cytoplasm. The enzyme catalyses a ribonucleoside 5'-phosphate + H2O = a ribonucleoside + phosphate. Functionally, nucleotidase that shows phosphatase activity on nucleoside 5'-monophosphates. This is 5'-nucleotidase SurE from Chlorobium limicola (strain DSM 245 / NBRC 103803 / 6330).